A 442-amino-acid chain; its full sequence is Putative amino acid transporter YuiF (442 aa).

11 consecutive transmembrane segments (helical) span residues 21–41, 51–71, 103–123, 146–166, 190–210, 236–256, 259–279, 292–312, 335–355, 364–384, and 421–441; these read IVIA…LGLG, LGGN…AAAL, LIVL…PVHI, LIAC…PVGF, IPYA…LSVI, IGIA…LSQT, VEGM…SGVM, MVLM…SNVL, LGAL…GSSF, IFVP…AIIG, and VPTF…AALV.

It localises to the cell membrane. The polypeptide is Putative amino acid transporter YuiF (yuiF) (Bacillus subtilis (strain 168)).